We begin with the raw amino-acid sequence, 178 residues long: UPF0302 protein BCAH187_A1683 (178 aa).

Belongs to the UPF0302 family.

In Bacillus cereus (strain AH187), this protein is UPF0302 protein BCAH187_A1683.